Here is a 562-residue protein sequence, read N- to C-terminus: Arginine--tRNA ligase (562 aa).

A 'HIGH' region motif is present at residues 129–139; sequence ANPTGPLHVGH.

The protein belongs to the class-I aminoacyl-tRNA synthetase family. As to quaternary structure, monomer.

The protein resides in the cytoplasm. It carries out the reaction tRNA(Arg) + L-arginine + ATP = L-arginyl-tRNA(Arg) + AMP + diphosphate. In Xanthomonas axonopodis pv. citri (strain 306), this protein is Arginine--tRNA ligase.